Consider the following 450-residue polypeptide: Probable ECA polymerase (450 aa).

11 helical membrane passes run 6 to 26, 37 to 57, 63 to 83, 118 to 138, 155 to 175, 181 to 201, 207 to 227, 228 to 248, 341 to 361, 378 to 398, and 410 to 430; these read FSGL…LTWF, VFFS…TSVL, VGVA…CFYA, VILM…NGFL, GVAL…VYFL, AWLF…MIVG, IIIA…ISLW, MLAA…LKRY, LVVM…GLII, YKAA…IVLA, and VFFI…YWLF.

This sequence belongs to the WzyE family. As to quaternary structure, probably part of a complex composed of WzxE, WzyE and WzzE.

The protein resides in the cell inner membrane. The protein operates within bacterial outer membrane biogenesis; enterobacterial common antigen biosynthesis. In terms of biological role, probably involved in the polymerization of enterobacterial common antigen (ECA) trisaccharide repeat units. This Escherichia coli O17:K52:H18 (strain UMN026 / ExPEC) protein is Probable ECA polymerase.